A 198-amino-acid chain; its full sequence is Peptidyl-tRNA hydrolase (198 aa).

Residue Tyr15 participates in tRNA binding. Catalysis depends on His20, which acts as the Proton acceptor. TRNA contacts are provided by Phe66, Asn68, and Asn114.

Belongs to the PTH family. Monomer.

It localises to the cytoplasm. It catalyses the reaction an N-acyl-L-alpha-aminoacyl-tRNA + H2O = an N-acyl-L-amino acid + a tRNA + H(+). Its function is as follows. Hydrolyzes ribosome-free peptidyl-tRNAs (with 1 or more amino acids incorporated), which drop off the ribosome during protein synthesis, or as a result of ribosome stalling. In terms of biological role, catalyzes the release of premature peptidyl moieties from peptidyl-tRNA molecules trapped in stalled 50S ribosomal subunits, and thus maintains levels of free tRNAs and 50S ribosomes. The protein is Peptidyl-tRNA hydrolase of Cupriavidus metallidurans (strain ATCC 43123 / DSM 2839 / NBRC 102507 / CH34) (Ralstonia metallidurans).